Reading from the N-terminus, the 68-residue chain is Metallothionein (68 aa).

Positions 7, 9, 14, 16, 20, 22, 25, 27, 35, 39, 40, 42, 43, 47, 50, 54, 56, 64, 66, and 67 each coordinate a divalent metal cation.

The protein belongs to the metallothionein superfamily. Type 1 family.

Metallothioneins have a high content of cysteine residues that bind various heavy metals. The chain is Metallothionein (mt) from Scyliorhinus torazame (Cloudy catshark).